The primary structure comprises 400 residues: Acetate kinase (400 aa).

Residue Asn7 participates in Mg(2+) binding. Residue Lys14 coordinates ATP. Arg91 contacts substrate. Asp148 functions as the Proton donor/acceptor in the catalytic mechanism. ATP-binding positions include His208 to Gly212, Asp283 to Arg285, and Gly332 to His336. Residue Glu387 coordinates Mg(2+).

It belongs to the acetokinase family. In terms of assembly, homodimer. It depends on Mg(2+) as a cofactor. Mn(2+) is required as a cofactor.

Its subcellular location is the cytoplasm. It catalyses the reaction acetate + ATP = acetyl phosphate + ADP. Its pathway is metabolic intermediate biosynthesis; acetyl-CoA biosynthesis; acetyl-CoA from acetate: step 1/2. Its function is as follows. Catalyzes the formation of acetyl phosphate from acetate and ATP. Can also catalyze the reverse reaction. The sequence is that of Acetate kinase from Clostridium beijerinckii (strain ATCC 51743 / NCIMB 8052) (Clostridium acetobutylicum).